We begin with the raw amino-acid sequence, 283 residues long: Undecaprenyl-diphosphatase (283 aa).

7 helical membrane passes run 40–60, 85–105, 113–133, 153–173, 193–213, 227–247, and 259–279; these read GAAF…IYFF, AKMG…GLLF, LRSL…LTIA, IGWK…IPGS, AARF…VFQL, LIAI…SIAF, and VFII…ATGM.

It belongs to the UppP family.

It localises to the cell inner membrane. The enzyme catalyses di-trans,octa-cis-undecaprenyl diphosphate + H2O = di-trans,octa-cis-undecaprenyl phosphate + phosphate + H(+). In terms of biological role, catalyzes the dephosphorylation of undecaprenyl diphosphate (UPP). Confers resistance to bacitracin. The sequence is that of Undecaprenyl-diphosphatase from Chlorobium limicola (strain DSM 245 / NBRC 103803 / 6330).